Here is a 231-residue protein sequence, read N- to C-terminus: Large ribosomal subunit protein uL1 (231 aa).

Belongs to the universal ribosomal protein uL1 family. As to quaternary structure, part of the 50S ribosomal subunit.

In terms of biological role, binds directly to 23S rRNA. The L1 stalk is quite mobile in the ribosome, and is involved in E site tRNA release. Functionally, protein L1 is also a translational repressor protein, it controls the translation of the L11 operon by binding to its mRNA. This is Large ribosomal subunit protein uL1 from Mycoplasmopsis synoviae (strain 53) (Mycoplasma synoviae).